Reading from the N-terminus, the 170-residue chain is Flavodoxin (170 aa).

The 162-residue stretch at 4 to 165 (IGLFYGTQTG…RVKTWVSEIK (162 aa)) folds into the Flavodoxin-like domain.

The protein belongs to the flavodoxin family. Requires FMN as cofactor.

Functionally, low-potential electron donor to a number of redox enzymes. The polypeptide is Flavodoxin (isiB) (Synechocystis sp. (strain ATCC 27184 / PCC 6803 / Kazusa)).